Reading from the N-terminus, the 909-residue chain is Protein translocase subunit SecA (909 aa).

ATP contacts are provided by residues Gln87, 105–109 (GEGKT), and Asp514. Residues 879–909 (TPVQGGPKVGRNDPCPCGSGKKYKHCHGKLS) form a disordered region. Zn(2+)-binding residues include Cys893, Cys895, Cys904, and His905. Basic residues predominate over residues 899–909 (KKYKHCHGKLS).

It belongs to the SecA family. As to quaternary structure, monomer and homodimer. Part of the essential Sec protein translocation apparatus which comprises SecA, SecYEG and auxiliary proteins SecDF-YajC and YidC. Zn(2+) serves as cofactor.

The protein resides in the cell inner membrane. Its subcellular location is the cytoplasm. The catalysed reaction is ATP + H2O + cellular proteinSide 1 = ADP + phosphate + cellular proteinSide 2.. In terms of biological role, part of the Sec protein translocase complex. Interacts with the SecYEG preprotein conducting channel. Has a central role in coupling the hydrolysis of ATP to the transfer of proteins into and across the cell membrane, serving both as a receptor for the preprotein-SecB complex and as an ATP-driven molecular motor driving the stepwise translocation of polypeptide chains across the membrane. The protein is Protein translocase subunit SecA of Azoarcus sp. (strain BH72).